Reading from the N-terminus, the 97-residue chain is Co-chaperonin GroES (97 aa).

Belongs to the GroES chaperonin family. Heptamer of 7 subunits arranged in a ring. Interacts with the chaperonin GroEL.

The protein localises to the cytoplasm. Its function is as follows. Together with the chaperonin GroEL, plays an essential role in assisting protein folding. The GroEL-GroES system forms a nano-cage that allows encapsulation of the non-native substrate proteins and provides a physical environment optimized to promote and accelerate protein folding. GroES binds to the apical surface of the GroEL ring, thereby capping the opening of the GroEL channel. The chain is Co-chaperonin GroES from Burkholderia vietnamiensis.